The primary structure comprises 363 residues: GDSL esterase/lipase At1g29670 (363 aa).

The first 24 residues, 1-24 (MESYLTKWCVVLVLLCFGFSVVKA), serve as a signal peptide directing secretion. Serine 39 (nucleophile) is an active-site residue. Catalysis depends on residues aspartate 327 and histidine 330.

Belongs to the 'GDSL' lipolytic enzyme family.

The protein localises to the secreted. The polypeptide is GDSL esterase/lipase At1g29670 (Arabidopsis thaliana (Mouse-ear cress)).